Consider the following 426-residue polypeptide: Histidinol dehydrogenase (426 aa).

Residues Tyr-123, Gln-185, and Asn-208 each coordinate NAD(+). Substrate contacts are provided by Ser-231, Gln-253, and His-256. Zn(2+) is bound by residues Gln-253 and His-256. Residues Glu-321 and His-322 each act as proton acceptor in the active site. Substrate contacts are provided by His-322, Asp-355, Glu-409, and His-414. Asp-355 contacts Zn(2+). Residue His-414 coordinates Zn(2+).

It belongs to the histidinol dehydrogenase family. The cofactor is Zn(2+).

The enzyme catalyses L-histidinol + 2 NAD(+) + H2O = L-histidine + 2 NADH + 3 H(+). It functions in the pathway amino-acid biosynthesis; L-histidine biosynthesis; L-histidine from 5-phospho-alpha-D-ribose 1-diphosphate: step 9/9. Its function is as follows. Catalyzes the sequential NAD-dependent oxidations of L-histidinol to L-histidinaldehyde and then to L-histidine. The sequence is that of Histidinol dehydrogenase from Bacillus licheniformis (strain ATCC 14580 / DSM 13 / JCM 2505 / CCUG 7422 / NBRC 12200 / NCIMB 9375 / NCTC 10341 / NRRL NRS-1264 / Gibson 46).